Consider the following 133-residue polypeptide: Small ribosomal subunit protein uS11 (133 aa).

It belongs to the universal ribosomal protein uS11 family. In terms of assembly, part of the 30S ribosomal subunit. Interacts with proteins S7 and S18. Binds to IF-3.

Functionally, located on the platform of the 30S subunit, it bridges several disparate RNA helices of the 16S rRNA. Forms part of the Shine-Dalgarno cleft in the 70S ribosome. This Shouchella clausii (strain KSM-K16) (Alkalihalobacillus clausii) protein is Small ribosomal subunit protein uS11.